A 377-amino-acid chain; its full sequence is Succinyl-diaminopimelate desuccinylase 2 (377 aa).

Zn(2+) is bound at residue H62. D64 is an active-site residue. Residue D95 coordinates Zn(2+). E129 acts as the Proton acceptor in catalysis. Zn(2+) is bound by residues E130, E158, and H350.

It belongs to the peptidase M20A family. DapE subfamily. In terms of assembly, homodimer. Zn(2+) is required as a cofactor. Co(2+) serves as cofactor.

It catalyses the reaction N-succinyl-(2S,6S)-2,6-diaminopimelate + H2O = (2S,6S)-2,6-diaminopimelate + succinate. It functions in the pathway amino-acid biosynthesis; L-lysine biosynthesis via DAP pathway; LL-2,6-diaminopimelate from (S)-tetrahydrodipicolinate (succinylase route): step 3/3. Catalyzes the hydrolysis of N-succinyl-L,L-diaminopimelic acid (SDAP), forming succinate and LL-2,6-diaminopimelate (DAP), an intermediate involved in the bacterial biosynthesis of lysine and meso-diaminopimelic acid, an essential component of bacterial cell walls. The sequence is that of Succinyl-diaminopimelate desuccinylase 2 from Shewanella loihica (strain ATCC BAA-1088 / PV-4).